The chain runs to 196 residues: dTTP/UTP pyrophosphatase (196 aa).

Asp-78 functions as the Proton acceptor in the catalytic mechanism.

It belongs to the Maf family. YhdE subfamily. The cofactor is a divalent metal cation.

Its subcellular location is the cytoplasm. The catalysed reaction is dTTP + H2O = dTMP + diphosphate + H(+). It carries out the reaction UTP + H2O = UMP + diphosphate + H(+). In terms of biological role, nucleoside triphosphate pyrophosphatase that hydrolyzes dTTP and UTP. May have a dual role in cell division arrest and in preventing the incorporation of modified nucleotides into cellular nucleic acids. The protein is dTTP/UTP pyrophosphatase of Photobacterium profundum (strain SS9).